The sequence spans 401 residues: F-box protein At2g43440 (401 aa).

In terms of domain architecture, F-box spans 7 to 53; that stretch reads NTNSIYIVPELLEDIFLRLPLKSILKFKTVSRQWRSILESKLFVERR.

In Arabidopsis thaliana (Mouse-ear cress), this protein is F-box protein At2g43440.